We begin with the raw amino-acid sequence, 500 residues long: Sodium/potassium/calcium exchanger 5 (500 aa).

Residues 1–29 (MQTKGGQTWARRALLLGILWATAHLPLSG) form the signal peptide. The Extracellular portion of the chain corresponds to 30-66 (TSLPQRLPRATGNSTQCVISPSSEFPEGFFTRQERRD). A helical transmembrane segment spans residues 67–87 (GGIIIYFLIIVYMFMAISIVC). Residues 88–111 (DEYFLPSLEIISESLGLSQDVAGT) are Cytoplasmic-facing. A helical transmembrane segment spans residues 112 to 132 (TFMAAGSSAPELVTAFLGVFI). Residues 133–136 (TKGD) are Extracellular-facing. Residues 137-157 (IGISTILGSAIYNLLGICAAC) form a helical membrane-spanning segment. The Cytoplasmic segment spans residues 158-169 (GLLSNTVSTLSC). The helical transmembrane segment at 170–190 (WPLFRDCAAYTISAAAVLGII) threads the bilayer. Residues 191–195 (YDNQV) are Extracellular-facing. The chain crosses the membrane as a helical span at residues 196-216 (YWYEGALLLLIYGLYVLVLCF). The Cytoplasmic segment spans residues 217–302 (DIKINQYIIK…PSVFNMPEAD (86 aa)). Residues 303 to 323 (LKRIFWVLSLPIITLLFLTTP) form a helical membrane-spanning segment. The Extracellular portion of the chain corresponds to 324–333 (DCRKKFWKNY). Residues 334–354 (FVITFFMSAIWISAFTYILVW) traverse the membrane as a helical segment. The Cytoplasmic portion of the chain corresponds to 355-368 (MVTITGETLEIPDT). The helical transmembrane segment at 369–389 (VMGLTLLAAGTSIPDTIASVL) threads the bilayer. Residues 390 to 399 (VARKGKGDMA) lie on the Extracellular side of the membrane. Residues 400–420 (MSNIVGSNVFDMLCLGIPWFI) form a helical membrane-spanning segment. Residues 421–437 (KTAFINGSAPAEVNSRG) are Cytoplasmic-facing. A helical transmembrane segment spans residues 438–458 (LTYITISLNISIIFLFLAVHF). Over 459–468 (NGWKLDRKLG) the chain is Extracellular. The helical transmembrane segment at 469-489 (IVCLLSYLGLATLSVLYELGI) threads the bilayer. Topologically, residues 490 to 500 (IGNNKIRGCGG) are cytoplasmic.

The protein belongs to the Ca(2+):cation antiporter (CaCA) (TC 2.A.19) family. SLC24A subfamily.

The protein localises to the golgi apparatus. The protein resides in the trans-Golgi network membrane. It is found in the melanosome. The enzyme catalyses Ca(2+)(out) + K(+)(out) + 4 Na(+)(in) = Ca(2+)(in) + K(+)(in) + 4 Na(+)(out). In terms of biological role, calcium, potassium:sodium antiporter that transports 1 Ca(2+) and 1 K(+) to the melanosome in exchange for 4 cytoplasmic Na(+). Involved in pigmentation, possibly by participating in ion transport in melanosomes. Predominant sodium-calcium exchanger in melanocytes. This Homo sapiens (Human) protein is Sodium/potassium/calcium exchanger 5.